A 1024-amino-acid chain; its full sequence is Seizure 6-like protein (1024 aa).

The signal sequence occupies residues 1 to 28 (MPAARPPAAGLRGISLFLALLLGSPAAA). Topologically, residues 29–958 (LERDALPEGD…ETSLEGGNMA (930 aa)) are extracellular. 3 disordered regions span residues 33 to 77 (ALPE…SQSA), 108 to 184 (RPKH…EVPL), and 212 to 234 (AHTL…EAPQ). Serine 49 carries O-linked (GalNAc...) serine glycosylation. Basic and acidic residues predominate over residues 56–66 (SPGKEHPEERV). The span at 110–120 (KHALPPKKKLP) shows a compositional bias: basic residues. The segment covering 138 to 162 (SAATVQRAGSQPASQGLDLLSSSTE) has biased composition (polar residues). O-glycosylated at one site stretches follow at residues 147–161 (SQPA…SSST) and 176–180 (SEEAS). A disulfide bond links cysteine 281 and cysteine 308. The CUB 1 domain occupies 281–389 (CSVSFSNPEG…GTFQLHYQAF (109 aa)). N-linked (GlcNAc...) asparagine glycosylation is found at asparagine 311, asparagine 328, and asparagine 350. The Sushi 1 domain maps to 391–450 (LSCNFPRRPDSGDVTVMDLHSGGVAHFHCHLGYELQGAKMLTCINASKPHWSSQEPICSA). Intrachain disulfides connect cysteine 393–cysteine 433 and cysteine 419–cysteine 448. N-linked (GlcNAc...) asparagine glycans are attached at residues asparagine 435, asparagine 458, asparagine 474, asparagine 514, asparagine 576, asparagine 618, asparagine 674, and asparagine 742. The CUB 2 domain occupies 452–562 (CGGAVHNATI…STFNIRFEAF (111 aa)). Residues 565–626 (GHCYEPYIQN…WNDTEPLCRA (62 aa)) enclose the Sushi 2 domain. Intrachain disulfides connect cysteine 567/cysteine 609 and cysteine 594/cysteine 624. Residues 628-739 (CGGELSAVAG…QGFIMNYIEV (112 aa)) form the CUB 3 domain. Sushi domains are found at residues 743 to 802 (DSCS…FCEK), 804 to 867 (MYCT…HCVS), and 871 to 932 (LACD…VCKV). Cystine bridges form between cysteine 745–cysteine 787, cysteine 773–cysteine 800, cysteine 806–cysteine 848, cysteine 834–cysteine 865, cysteine 873–cysteine 915, and cysteine 901–cysteine 930. A helical transmembrane segment spans residues 959–979 (LAIFIPVLIISLLLGGAYIYI). The Cytoplasmic portion of the chain corresponds to 980–1024 (TRCRYYSNLRLPLMYSHPYSQITVETEFDNPIYETGETREYEVSI).

It belongs to the SEZ6 family. Post-translationally, O-glycosylated. In terms of tissue distribution, widely expressed, including adult and fetal brains and lungs. Not expressed in all lung cancer cell lines.

It localises to the endoplasmic reticulum membrane. Functionally, may contribute to specialized endoplasmic reticulum functions in neurons. The chain is Seizure 6-like protein (SEZ6L) from Homo sapiens (Human).